Reading from the N-terminus, the 745-residue chain is Translation initiation factor IF-2 (745 aa).

Positions 1–154 are disordered; that stretch reads MSDKPRRDTG…PAARPVVRPR (154 aa). Positions 36–56 are enriched in polar residues; that stretch reads TGRSPNASTGGNRSAGNQAGN. The segment covering 68 to 98 has biased composition (low complexity); it reads ATTPAPNRNTPPAGARQGGAANARTGTPPVA. Residues 99-113 are compositionally biased toward gly residues; sequence RGGGGGVTPPTGRGG. Over residues 114 to 126 the composition is skewed to low complexity; the sequence is NNPRAARNQPRSR. Residues 127–138 show a composition bias toward basic and acidic residues; it reads QQPEEREREHVL. The 170-residue stretch at 241–410 folds into the tr-type G domain; sequence PRPPVVTIMG…LLVADLEDLR (170 aa). The interval 250-257 is G1; that stretch reads GHVDHGKT. 250 to 257 is a GTP binding site; that stretch reads GHVDHGKT. A G2 region spans residues 275-279; that stretch reads GITQH. The interval 296–299 is G3; that stretch reads DTPG. Residues 296 to 300 and 350 to 353 each bind GTP; these read DTPGH and NKID. Positions 350 to 353 are G4; that stretch reads NKID. The tract at residues 386–388 is G5; sequence SAR.

Belongs to the TRAFAC class translation factor GTPase superfamily. Classic translation factor GTPase family. IF-2 subfamily.

It localises to the cytoplasm. Its function is as follows. One of the essential components for the initiation of protein synthesis. Protects formylmethionyl-tRNA from spontaneous hydrolysis and promotes its binding to the 30S ribosomal subunits. Also involved in the hydrolysis of GTP during the formation of the 70S ribosomal complex. This chain is Translation initiation factor IF-2, found in Chloroflexus aurantiacus (strain ATCC 29366 / DSM 635 / J-10-fl).